We begin with the raw amino-acid sequence, 145 residues long: Group IID secretory phospholipase A2 (145 aa).

The N-terminal stretch at 1–20 (MELALLCGLVVMAGVIPIQG) is a signal peptide. 7 disulfides stabilise this stretch: Cys46-Cys138, Cys48-Cys64, Cys63-Cys118, Cys69-Cys145, Cys70-Cys111, Cys79-Cys104, and Cys97-Cys109. Residues His47, Gly49, and Gly51 each contribute to the Ca(2+) site. His67 is a catalytic residue. A Ca(2+)-binding site is contributed by Asp68. A glycan (N-linked (GlcNAc...) asparagine) is linked at Asn89. Residue Asp112 is part of the active site.

It belongs to the phospholipase A2 family. Ca(2+) serves as cofactor. In terms of tissue distribution, highly expressed in pancreas and spleen and less abundantly in colon, thymus, placenta, small intestine, and prostate.

Its subcellular location is the secreted. The catalysed reaction is a 1,2-diacyl-sn-glycero-3-phosphoethanolamine + H2O = a 1-acyl-sn-glycero-3-phosphoethanolamine + a fatty acid + H(+). The enzyme catalyses 1-hexadecanoyl-2-(9Z-octadecenoyl)-sn-glycero-3-phosphoethanolamine + H2O = 1-hexadecanoyl-sn-glycero-3-phosphoethanolamine + (9Z)-octadecenoate + H(+). It catalyses the reaction 1-hexadecanoyl-2-(9Z,12Z-octadecadienoyl)-sn-glycero-3-phosphoethanolamine + H2O = 1-hexadecanoyl-sn-glycero-3-phosphoethanolamine + (9Z,12Z)-octadecadienoate + H(+). It carries out the reaction 1,2-dihexadecanoyl-sn-glycero-3-phospho-(1'-sn-glycerol) + H2O = 1-hexadecanoyl-sn-glycero-3-phospho-(1'-sn-glycerol) + hexadecanoate + H(+). The catalysed reaction is 1-hexadecanoyl-2-(9Z-octadecenoyl)-sn-glycero-3-phospho-(1'-sn-glycerol) + H2O = 1-hexadecanoyl-sn-glycero-3-phospho-(1'-sn-glycerol) + (9Z)-octadecenoate + H(+). The enzyme catalyses a 1,2-diacyl-sn-glycero-3-phosphocholine + H2O = a 1-acyl-sn-glycero-3-phosphocholine + a fatty acid + H(+). It catalyses the reaction 1,2-dihexadecanoyl-sn-glycero-3-phosphocholine + H2O = 1-hexadecanoyl-sn-glycero-3-phosphocholine + hexadecanoate + H(+). It carries out the reaction 1-hexadecanoyl-2-(9Z-octadecenoyl)-sn-glycero-3-phosphocholine + H2O = 1-hexadecanoyl-sn-glycero-3-phosphocholine + (9Z)-octadecenoate + H(+). The catalysed reaction is 1-hexadecanoyl-2-(9Z,12Z-octadecadienoyl)-sn-glycero-3-phosphocholine + H2O = (9Z,12Z)-octadecadienoate + 1-hexadecanoyl-sn-glycero-3-phosphocholine + H(+). The enzyme catalyses 1-hexadecanoyl-2-(4Z,7Z,10Z,13Z,16Z,19Z-docosahexaenoyl)-sn-glycero-3-phosphocholine + H2O = (4Z,7Z,10Z,13Z,16Z,19Z)-docosahexaenoate + 1-hexadecanoyl-sn-glycero-3-phosphocholine + H(+). In terms of biological role, secretory calcium-dependent phospholipase A2 that primarily targets extracellular lipids, exerting anti-inflammatory and immunosuppressive functions. Hydrolyzes the ester bond of the fatty acyl group attached at sn-2 position of phospholipids (phospholipase A2 activity) with preference for phosphatidylethanolamines and phosphatidylglycerols over phosphatidylcholines. In draining lymph nodes, selectively hydrolyzes diacyl and alkenyl forms of phosphatidylethanolamines, releasing omega-3 polyunsaturated fatty acids (PUFAs) such as eicosapentaenoate and docosahexaenoate that are precursors of the anti-inflammatory lipid mediators, resolvins. During the resolution phase of acute inflammation drives docosahexaenoate-derived resolvin D1 synthesis, which suppresses dendritic cell activation and T-helper 1 immune response. May act in an autocrine and paracrine manner. Via a mechanism independent of its catalytic activity, promotes differentiation of regulatory T cells (Tregs) and participates in the maintenance of immune tolerance. May contribute to lipid remodeling of cellular membranes and generation of lipid mediators involved in pathogen clearance. Displays bactericidal activity against Gram-positive bacteria by directly hydrolyzing phospholipids of the bacterial membrane. The sequence is that of Group IID secretory phospholipase A2 (PLA2G2D) from Homo sapiens (Human).